A 207-amino-acid chain; its full sequence is NADH-quinone oxidoreductase subunit A (207 aa).

3 helical membrane passes run 6-26, 62-82, and 87-107; these read LSAI…LVVP, LVAI…AYAV, and AGWL…IGLV.

Belongs to the complex I subunit 3 family. NDH-1 is composed of 14 different subunits. Subunits NuoA, H, J, K, L, M, N constitute the membrane sector of the complex.

It is found in the cell inner membrane. It carries out the reaction a quinone + NADH + 5 H(+)(in) = a quinol + NAD(+) + 4 H(+)(out). NDH-1 shuttles electrons from NADH, via FMN and iron-sulfur (Fe-S) centers, to quinones in the respiratory chain. The immediate electron acceptor for the enzyme in this species is believed to be ubiquinone. Couples the redox reaction to proton translocation (for every two electrons transferred, four hydrogen ions are translocated across the cytoplasmic membrane), and thus conserves the redox energy in a proton gradient. This Psychrobacter cryohalolentis (strain ATCC BAA-1226 / DSM 17306 / VKM B-2378 / K5) protein is NADH-quinone oxidoreductase subunit A.